The primary structure comprises 127 residues: Glycine cleavage system H protein (127 aa).

The Lipoyl-binding domain maps to 24 to 105 (TLTIGITDLA…AYDAWLFKIK (82 aa)). Lys-65 carries the post-translational modification N6-lipoyllysine.

This sequence belongs to the GcvH family. The glycine cleavage system is composed of four proteins: P, T, L and H. The cofactor is (R)-lipoate.

Its function is as follows. The glycine cleavage system catalyzes the degradation of glycine. The H protein shuttles the methylamine group of glycine from the P protein to the T protein. This is Glycine cleavage system H protein from Ralstonia nicotianae (strain ATCC BAA-1114 / GMI1000) (Ralstonia solanacearum).